Consider the following 420-residue polypeptide: Pyruvate dehydrogenase E1 component subunit alpha, mitochondrial (420 aa).

The N-terminal 33 residues, 1–33 (MLAASFKRQPSQLVRGLGAVLRTPTRIGHVRTM), are a transit peptide targeting the mitochondrion. Residues H112, Y138, R139, A177, G185, V187, D216, G217, A218, N245, and Y247 each coordinate pyruvate. Y138 and R139 together coordinate thiamine diphosphate. Thiamine diphosphate is bound by residues G185, V187, D216, G217, A218, and N245. D216 provides a ligand contact to Mg(2+). Residues N245 and Y247 each coordinate Mg(2+). H312 is a thiamine diphosphate binding site. At S313 the chain carries Phosphoserine; by PDK1 and PDK2.

Pyruvate dehydrogenase (E1) is a tetramer of 2 alpha and 2 beta subunits. Eukaryotic pyruvate dehydrogenase (PDH) complexes are organized as a core consisting of the oligomeric dihydrolipoamide acetyl-transferase (E2), around which are arranged multiple copies of pyruvate dehydrogenase (E1), dihydrolipoamide dehydrogenase (E3) and protein X (E3BP) bound by non-covalent bonds. It depends on thiamine diphosphate as a cofactor. Requires Mg(2+) as cofactor. Phosphorylated at Ser-313 by pyruvate dehydrogenase kinases PKP1 (PDK1) and PKP2 (PDK2), and dephosphorylated by pyruvate dehydrogenase phosphatases PTC5 and PTC6.

The protein resides in the mitochondrion matrix. It carries out the reaction N(6)-[(R)-lipoyl]-L-lysyl-[protein] + pyruvate + H(+) = N(6)-[(R)-S(8)-acetyldihydrolipoyl]-L-lysyl-[protein] + CO2. E1 activity is regulated by phosphorylation (inactivation) and dephosphorylation (activation) of the alpha subunit. Its function is as follows. The pyruvate dehydrogenase complex catalyzes the overall conversion of pyruvate to acetyl-CoA and CO(2). This is Pyruvate dehydrogenase E1 component subunit alpha, mitochondrial (PDA1) from Saccharomyces cerevisiae (strain ATCC 204508 / S288c) (Baker's yeast).